The sequence spans 225 residues: Dehydrin DHN4 (225 aa).

A disordered region spans residues 1 to 78; that stretch reads MEYQGQQHGR…EDDGMGGRRK (78 aa). Gly residues predominate over residues 21 to 39; the sequence is HGVGTGMGTHGGVGTGAAA. 5 repeat units span residues 105-118, 119-136, 137-159, 160-178, and 179-199. The segment at 105 to 199 is 5 X approximate tandem repeats; sequence YGQQGTGMAG…GTGMHGTGGT (95 aa).

It belongs to the plant dehydrin family.

The sequence is that of Dehydrin DHN4 (DHN4) from Hordeum vulgare (Barley).